The chain runs to 61 residues: MKGTPSFGKINKSHTHIRCRRCGRNAYNVSKHYCAACGFGKTKKIRRYSWQNKKVNGVRIR.

Cys-19, Cys-22, Cys-34, and Cys-37 together coordinate Zn(2+). The C4-type zinc-finger motif lies at 19–37 (CRRCGRNAYNVSKHYCAAC).

Belongs to the eukaryotic ribosomal protein eL37 family. It depends on Zn(2+) as a cofactor.

Binds to the 23S rRNA. The chain is Large ribosomal subunit protein eL37 from Saccharolobus islandicus (strain Y.N.15.51 / Yellowstone #2) (Sulfolobus islandicus).